A 641-amino-acid chain; its full sequence is Chaperone protein DnaK (641 aa).

Thr-201 is subject to Phosphothreonine; by autocatalysis. Over residues Ala-604–Lys-622 the composition is skewed to low complexity. A disordered region spans residues Ala-604–Asp-625.

This sequence belongs to the heat shock protein 70 family.

Acts as a chaperone. The protein is Chaperone protein DnaK of Stenotrophomonas maltophilia (strain R551-3).